Consider the following 579-residue polypeptide: Alpha-glucosidase (579 aa).

Catalysis depends on aspartate 212, which acts as the Nucleophile. Glutamate 269 (proton donor) is an active-site residue.

The protein belongs to the glycosyl hydrolase 13 family.

It catalyses the reaction Hydrolysis of terminal, non-reducing (1-&gt;4)-linked alpha-D-glucose residues with release of alpha-D-glucose.. This is Alpha-glucosidase (mal1) from Schizosaccharomyces pombe (strain 972 / ATCC 24843) (Fission yeast).